The following is a 385-amino-acid chain: Cell division protein FtsZ (385 aa).

GTP contacts are provided by residues 37 to 41 (GGGSN), 125 to 127 (GTG), Glu156, Lys160, and Asp204.

This sequence belongs to the FtsZ family. Homodimer. Polymerizes to form a dynamic ring structure in a strictly GTP-dependent manner. Interacts directly with several other division proteins.

Its subcellular location is the cytoplasm. In terms of biological role, essential cell division protein that forms a contractile ring structure (Z ring) at the future cell division site. The regulation of the ring assembly controls the timing and the location of cell division. One of the functions of the FtsZ ring is to recruit other cell division proteins to the septum to produce a new cell wall between the dividing cells. Binds GTP and shows GTPase activity. The chain is Cell division protein FtsZ from Helicobacter pylori (strain ATCC 700392 / 26695) (Campylobacter pylori).